The following is a 157-amino-acid chain: Putative electron transport protein YsaA (157 aa).

4 4Fe-4S ferredoxin-type domains span residues 2 to 32 (NRFI…NQDC), 48 to 80 (KDHC…REHG), 80 to 109 (GHIF…VVSS), and 112 to 144 (KARA…CMDV). [4Fe-4S] cluster contacts are provided by Cys-12, Cys-15, Cys-18, Cys-22, Cys-58, Cys-61, Cys-66, Cys-70, Cys-89, Cys-92, Cys-95, Cys-99, Cys-118, Cys-121, Cys-130, and Cys-134.

The polypeptide is Putative electron transport protein YsaA (ysaA) (Escherichia coli (strain K12)).